The primary structure comprises 694 residues: GRB2-associated-binding protein 1 (694 aa).

The residue at position 2 (serine 2) is an N-acetylserine. A PH domain is found at 5-116; it reads EVVCSGWLRK…WVRCICDICG (112 aa). Disordered regions lie at residues 122 to 164 and 194 to 231; these read EDPV…PYQL and PEPTRTHADSAKSTSSETDCNDNVPSHKNPASSQSKHG. Residues 145–157 are compositionally biased toward polar residues; the sequence is APPSTQADSSSAT. Over residues 194 to 203 the composition is skewed to basic and acidic residues; the sequence is PEPTRTHADS. The segment covering 204–231 has biased composition (polar residues); the sequence is AKSTSSETDCNDNVPSHKNPASSQSKHG. A phosphoserine mark is found at serine 251, serine 253, serine 266, and serine 304. The interval 323–386 is disordered; sequence FPEGTLGQTS…TAGMSPSRSN (64 aa). Over residues 362–386 the composition is skewed to polar residues; it reads IPRTASDTDSSYCIPTAGMSPSRSN. Threonine 387 carries the phosphothreonine modification. A phosphoserine mark is found at serine 402 and serine 454. 2 disordered regions span residues 493 to 532 and 544 to 656; these read AHMGFRSSPKTPPRRPVPVADCEPPPVDRNLKPDRKVKPA and ELQA…ADER. The residue at position 547 (alanine 547) is a Phosphoserine. The segment covering 594–611 has biased composition (polar residues); that stretch reads PNLSSEDPNLFGSNSLDG. Residue tyrosine 627 is modified to Phosphotyrosine. The residue at position 638 (threonine 638) is a Phosphothreonine. Serine 651 carries the phosphoserine modification. Tyrosine 659 is subject to Phosphotyrosine. The interval 671–694 is disordered; sequence KSTREAWTDGRQSTESETPAKSVK. The segment covering 672–684 has biased composition (basic and acidic residues); the sequence is STREAWTDGRQST. At serine 683 the chain carries Phosphoserine. Polar residues predominate over residues 685 to 694; that stretch reads ESETPAKSVK.

The protein belongs to the GAB family. In terms of assembly, identified in a complex containing FRS2, GRB2, GAB1, PIK3R1 and SOS1. Forms a tripartite complex containing GAB1, METTL13 and SPRY2. Within the complex interacts with METTL13. Interacts with GRB2 and with other SH2-containing proteins. Interacts with phosphorylated LAT2. Interacts with PTPRJ. Interacts (phosphorylated) with PTPN11. Interacts with HCK. Post-translationally, phosphorylated in response to FGFR1 activation. Phosphorylated on tyrosine residue(s) by the epidermal growth factor receptor (EGFR) and the insulin receptor (INSR). Tyrosine phosphorylation of GAB1 mediates interaction with several proteins that contain SH2 domains. Phosphorylated on tyrosine residues by HCK upon IL6 signaling.

Its function is as follows. Adapter protein that plays a role in intracellular signaling cascades triggered by activated receptor-type kinases. Plays a role in FGFR1 signaling. Probably involved in signaling by the epidermal growth factor receptor (EGFR) and the insulin receptor (INSR). Involved in the MET/HGF-signaling pathway. In Homo sapiens (Human), this protein is GRB2-associated-binding protein 1 (GAB1).